Consider the following 308-residue polypeptide: Methionyl-tRNA formyltransferase (308 aa).

Serine 110–proline 113 is a binding site for (6S)-5,6,7,8-tetrahydrofolate.

This sequence belongs to the Fmt family.

The catalysed reaction is L-methionyl-tRNA(fMet) + (6R)-10-formyltetrahydrofolate = N-formyl-L-methionyl-tRNA(fMet) + (6S)-5,6,7,8-tetrahydrofolate + H(+). Functionally, attaches a formyl group to the free amino group of methionyl-tRNA(fMet). The formyl group appears to play a dual role in the initiator identity of N-formylmethionyl-tRNA by promoting its recognition by IF2 and preventing the misappropriation of this tRNA by the elongation apparatus. The sequence is that of Methionyl-tRNA formyltransferase from Neisseria gonorrhoeae (strain ATCC 700825 / FA 1090).